A 435-amino-acid polypeptide reads, in one-letter code: Adenylosuccinate synthetase (435 aa).

Residues G17–K23 and G45–T47 each bind GTP. D18 serves as the catalytic Proton acceptor. Residues D18 and G45 each coordinate Mg(2+). IMP contacts are provided by residues D18–K21, N43–H46, T135, R149, Q230, T245, and R309. H46 acts as the Proton donor in catalysis. Residue T305–R311 coordinates substrate. GTP is bound by residues R311, L337–D339, and S419–G421.

This sequence belongs to the adenylosuccinate synthetase family. In terms of assembly, homodimer. Mg(2+) serves as cofactor.

The protein resides in the cytoplasm. The enzyme catalyses IMP + L-aspartate + GTP = N(6)-(1,2-dicarboxyethyl)-AMP + GDP + phosphate + 2 H(+). The protein operates within purine metabolism; AMP biosynthesis via de novo pathway; AMP from IMP: step 1/2. Its function is as follows. Plays an important role in the de novo pathway of purine nucleotide biosynthesis. Catalyzes the first committed step in the biosynthesis of AMP from IMP. This is Adenylosuccinate synthetase from Spiroplasma citri.